A 183-amino-acid chain; its full sequence is Intraflagellar transport protein 27 homolog (183 aa).

Residues 12–19, 63–67, and 120–123 each bind GTP; these read GAPTVGKT, DVSGQ, and NKSD.

This sequence belongs to the small GTPase superfamily. Rab family. As to quaternary structure, component of the IFT complex B.

The protein localises to the cell projection. It is found in the cilium. Its subcellular location is the flagellum. Its function is as follows. Small GTPase-like component of the intraflagellar transport (IFT) complex B required for both anterograde and retrograde intraflagellar transport. May be involved in cargo loading of the retrograde transport. The chain is Intraflagellar transport protein 27 homolog from Trypanosoma brucei brucei (strain 927/4 GUTat10.1).